A 212-amino-acid polypeptide reads, in one-letter code: Peroxiredoxin 2 (212 aa).

Residues Pro7–Leu162 enclose the Thioredoxin domain. Residue Cys49 is the Cysteine sulfenic acid (-SOH) intermediate of the active site. A substrate-binding site is contributed by Arg125.

This sequence belongs to the peroxiredoxin family. Prx6 subfamily. As to quaternary structure, homodecamer. Pentamer of dimers that assemble into a ring structure.

The protein resides in the cytoplasm. It catalyses the reaction a hydroperoxide + [thioredoxin]-dithiol = an alcohol + [thioredoxin]-disulfide + H2O. Its function is as follows. Thiol-specific peroxidase that catalyzes the reduction of hydrogen peroxide and organic hydroperoxides to water and alcohols, respectively. Plays a role in cell protection against oxidative stress by detoxifying peroxides. The sequence is that of Peroxiredoxin 2 from Sulfurisphaera tokodaii (strain DSM 16993 / JCM 10545 / NBRC 100140 / 7) (Sulfolobus tokodaii).